The chain runs to 122 residues: Large ribosomal subunit protein uL14 (122 aa).

This sequence belongs to the universal ribosomal protein uL14 family. Part of the 50S ribosomal subunit. Forms a cluster with proteins L3 and L19. In the 70S ribosome, L14 and L19 interact and together make contacts with the 16S rRNA in bridges B5 and B8.

In terms of biological role, binds to 23S rRNA. Forms part of two intersubunit bridges in the 70S ribosome. This chain is Large ribosomal subunit protein uL14, found in Caldanaerobacter subterraneus subsp. tengcongensis (strain DSM 15242 / JCM 11007 / NBRC 100824 / MB4) (Thermoanaerobacter tengcongensis).